We begin with the raw amino-acid sequence, 249 residues long: 5'-nucleotidase SurE (249 aa).

Asp8, Asp9, Ser39, and Asn91 together coordinate a divalent metal cation.

Belongs to the SurE nucleotidase family. It depends on a divalent metal cation as a cofactor.

It is found in the cytoplasm. The catalysed reaction is a ribonucleoside 5'-phosphate + H2O = a ribonucleoside + phosphate. Nucleotidase that shows phosphatase activity on nucleoside 5'-monophosphates. The polypeptide is 5'-nucleotidase SurE (Pseudomonas syringae pv. syringae (strain B728a)).